The primary structure comprises 376 residues: D-alanine--D-alanine ligase (376 aa).

Residues 153–366 (KLLLAGQGLP…YPELVHRLIQ (214 aa)) form the ATP-grasp domain. Position 185–240 (185–240 (VEALGYPVFVKPARAGSSIGITRVTSREGLAAAVAEAVSHDPKVVVEAALVGREIE)) interacts with ATP. The Mg(2+) site is built by D317, E333, and N335.

Belongs to the D-alanine--D-alanine ligase family. Mg(2+) serves as cofactor. The cofactor is Mn(2+).

The protein resides in the cytoplasm. It catalyses the reaction 2 D-alanine + ATP = D-alanyl-D-alanine + ADP + phosphate + H(+). It participates in cell wall biogenesis; peptidoglycan biosynthesis. Cell wall formation. This chain is D-alanine--D-alanine ligase, found in Kineococcus radiotolerans (strain ATCC BAA-149 / DSM 14245 / SRS30216).